The following is a 258-amino-acid chain: Snake venom serine protease CL2 (258 aa).

Residues 1 to 18 (MVLIRVLANLLIIQLSYA) form the signal peptide. A propeptide spanning residues 19–24 (QKSSEL) is cleaved from the precursor. The Peptidase S1 domain maps to 25 to 249 (VIGGDECNIN…YTDWIKSIIA (225 aa)). 6 disulfide bridges follow: C31–C163, C50–C66, C98–C256, C142–C210, C174–C189, and C200–C225. Residue N44 is glycosylated (N-linked (GlcNAc...) asparagine). H65 serves as the catalytic Charge relay system. N-linked (GlcNAc...) asparagine glycosylation is present at N103. D110 (charge relay system) is an active-site residue. N121 is a glycosylation site (N-linked (GlcNAc...) asparagine). The active-site Charge relay system is S204. N-linked (GlcNAc...) asparagine glycosylation occurs at N251.

The protein belongs to the peptidase S1 family. Snake venom subfamily. Monomer. As to expression, expressed by the venom gland.

It localises to the secreted. In terms of biological role, snake venom serine protease that may act in the hemostasis system of the prey. This is Snake venom serine protease CL2 from Trimeresurus stejnegeri (Chinese green tree viper).